We begin with the raw amino-acid sequence, 1040 residues long: Multidrug resistance protein MdtB (1040 aa).

12 consecutive transmembrane segments (helical) span residues 16-36 (FIMR…AGII), 347-367 (LMMA…NIPA), 369-389 (IIPG…MVFL), 396-416 (LTLM…IVVI), 440-460 (IGFT…PLLF), 472-492 (FAIT…TLTP), 537-557 (WLTL…WVFI), 863-883 (LGST…VLGI), 888-908 (FIHP…ALLA), 911-931 (IAGS…IGIV), 968-988 (ILMT…STGV), and 998-1018 (IGMV…TPVI).

Belongs to the resistance-nodulation-cell division (RND) (TC 2.A.6) family. MdtB subfamily. As to quaternary structure, part of a tripartite efflux system composed of MdtA, MdtB and MdtC. MdtB forms a heteromultimer with MdtC.

Its subcellular location is the cell inner membrane. In terms of biological role, the MdtABC tripartite complex confers resistance against novobiocin and deoxycholate. The chain is Multidrug resistance protein MdtB from Escherichia coli O17:K52:H18 (strain UMN026 / ExPEC).